A 381-amino-acid polypeptide reads, in one-letter code: Guanine nucleotide-binding protein G(olf) subunit alpha (381 aa).

Residues 1-25 are disordered; that stretch reads MGCLGNSSKTAEDQGVDEKERREAN. Residue Gly-2 is the site of N-palmitoyl glycine attachment. Cys-3 carries S-palmitoyl cysteine lipidation. The span at 10-25 shows a compositional bias: basic and acidic residues; it reads TAEDQGVDEKERREAN. The G-alpha domain maps to 41-381; that stretch reads ATHRLLLLGA…RMHLKQYELL (341 aa). The G1 motif stretch occupies residues 44 to 57; it reads RLLLLGAGESGKST. 6 residues coordinate GTP: Glu-52, Ser-53, Gly-54, Lys-55, Ser-56, and Thr-57. Residue Ser-56 participates in Mg(2+) binding. Phosphothreonine is present on Thr-178. Residues 183-191 are G2 motif; the sequence is DLLRCRVLT. 3 residues coordinate GTP: Leu-185, Arg-186, and Thr-191. Thr-191 and Asp-210 together coordinate Mg(2+). The tract at residues 206–215 is G3 motif; the sequence is FHMFDVGGQR. GTP contacts are provided by Gly-213, Asn-279, Lys-280, Asp-282, and Ala-353. The segment at 275–282 is G4 motif; it reads ILFLNKQD. A G5 motif region spans residues 351–356; the sequence is TCAVDT.

This sequence belongs to the G-alpha family. G(s) subfamily. In terms of assembly, g proteins are composed of 3 units; alpha, beta and gamma. The alpha chain contains the guanine nucleotide binding site. Interacts with GAS2L2. Interacts (GDP-bound form) with RIC8B (via C-terminus); promoting GNAL folding and association with the plasma membrane.

The protein localises to the cell membrane. The catalysed reaction is GTP + H2O = GDP + phosphate + H(+). Functionally, guanine nucleotide-binding protein (G protein) involved as transducer in olfactory signal transduction controlled by G protein-coupled receptors (GPCRs). Contains the guanine nucleotide binding site and alternates between an active, GTP-bound state and an inactive, GDP-bound state. Signaling by an activated GPCR promotes GDP release and GTP binding. The alpha subunit has a low GTPase activity that converts bound GTP to GDP, thereby terminating the signal. Both GDP release and GTP hydrolysis are modulated by numerous regulatory proteins. GNAL/G(olf) alpha specifically mediates olfactory signal transduction within the olfactory neuroepithelium and the basal ganglia following GPCRs activation. Acts by promoting the specific activation of adenylyl cyclase ADCY3, resulting in increased levels of the signaling molecule cAMP. In Rattus norvegicus (Rat), this protein is Guanine nucleotide-binding protein G(olf) subunit alpha.